The sequence spans 500 residues: Arabinofuranosidase/B-xylosidase (500 aa).

The N-terminal stretch at 1-21 (MLSNARIIAAGCIAAGSLVAA) is a signal peptide. Asn467 carries N-linked (GlcNAc...) asparagine glycosylation.

It belongs to the glycosyl hydrolase 54 family.

The catalysed reaction is Hydrolysis of terminal non-reducing alpha-L-arabinofuranoside residues in alpha-L-arabinosides.. It catalyses the reaction Hydrolysis of (1-&gt;4)-beta-D-xylans, to remove successive D-xylose residues from the non-reducing termini.. The polypeptide is Arabinofuranosidase/B-xylosidase (xyl1) (Trichoderma koningii (Hypocrea koningii)).